The following is a 444-amino-acid chain: Glutamate-1-semialdehyde 2,1-aminomutase (444 aa).

K267 carries the N6-(pyridoxal phosphate)lysine modification.

It belongs to the class-III pyridoxal-phosphate-dependent aminotransferase family. HemL subfamily. As to quaternary structure, homodimer. Pyridoxal 5'-phosphate is required as a cofactor.

It localises to the cytoplasm. The catalysed reaction is (S)-4-amino-5-oxopentanoate = 5-aminolevulinate. It functions in the pathway porphyrin-containing compound metabolism; protoporphyrin-IX biosynthesis; 5-aminolevulinate from L-glutamyl-tRNA(Glu): step 2/2. In Xylella fastidiosa (strain 9a5c), this protein is Glutamate-1-semialdehyde 2,1-aminomutase.